The sequence spans 328 residues: MAMGEFDLIKRYFQQQILVDDSVQLSIGDDCALVSVPENYQLAITTDTMVENTHFLPTISPEDLAYKAVATNLSDLAAMGAQPKWVSLALTLPNVDENWISTFSQSLLHTLKQYNVTLIGGDTTKGNLSITITAQGFVEKNKGICRHKAQIGDLIYVSSTLGDSAAGLTQILLGKSAVDSDDVFLQQRHLRPTPRIELGQALIGIAHVAIDLSDGLISDLGHILERSQCSAEVELTALPLSSSILNKYDRTQAEQFALSGGEDYELCFTIPPEYKDELELRLKKLNVPCTCIGKINEKCGDFSPRFLRDGKPVNITFSSGFDHFKESK.

Mg(2+) is bound by residues Asp30, Thr45, Thr46, and Asp47. His54 provides a ligand contact to substrate. Mg(2+) is bound by residues Asp75 and Asp122. ATP is bound by residues 121–122 and Arg146; that span reads GD. Mg(2+) is bound at residue Asp211. Residue Ser213 participates in ATP binding. Mg(2+) is bound at residue Asp214. Glu262 and Phe321 together coordinate substrate.

The protein belongs to the thiamine-monophosphate kinase family.

It catalyses the reaction thiamine phosphate + ATP = thiamine diphosphate + ADP. It functions in the pathway cofactor biosynthesis; thiamine diphosphate biosynthesis; thiamine diphosphate from thiamine phosphate: step 1/1. Functionally, catalyzes the ATP-dependent phosphorylation of thiamine-monophosphate (TMP) to form thiamine-pyrophosphate (TPP), the active form of vitamin B1. The polypeptide is Thiamine-monophosphate kinase (Haemophilus influenzae (strain ATCC 51907 / DSM 11121 / KW20 / Rd)).